The following is a 443-amino-acid chain: Methyl-coenzyme M reductase subunit beta (443 aa).

Tyr367 contacts coenzyme M. Residue Gly369 participates in coenzyme B binding.

The protein belongs to the methyl-coenzyme M reductase beta subunit family. As to quaternary structure, MCR is a hexamer of two alpha, two beta, and two gamma chains, forming a dimer of heterotrimers. Coenzyme F430 serves as cofactor.

The protein localises to the cytoplasm. The catalysed reaction is coenzyme B + methyl-coenzyme M = methane + coenzyme M-coenzyme B heterodisulfide. It participates in one-carbon metabolism; methyl-coenzyme M reduction; methane from methyl-coenzyme M: step 1/1. Functionally, component of the methyl-coenzyme M reductase (MCR) I that catalyzes the reductive cleavage of methyl-coenzyme M (CoM-S-CH3 or 2-(methylthio)ethanesulfonate) using coenzyme B (CoB or 7-mercaptoheptanoylthreonine phosphate) as reductant which results in the production of methane and the mixed heterodisulfide of CoB and CoM (CoM-S-S-CoB). This is the final step in methanogenesis. The protein is Methyl-coenzyme M reductase subunit beta (mcrB) of Methanococcus vannielii.